A 320-amino-acid chain; its full sequence is Pyrroline-5-carboxylate reductase 2 (320 aa).

Residue Ser2 is modified to N-acetylserine. Residues 6–11 and Ser34 each bind NADP(+); that span reads IGAGQL. NADPH-binding residues include Ala8, Gln10, Leu11, Ser34, Glu36, Asn56, Val70, Lys71, and Ala97. NADP(+)-binding positions include Asn56, 69-72, and 95-97; these read AVKP and CAA. L-proline is bound at residue Glu164. NADPH is bound at residue Asn230. Positions 237 and 238 each coordinate L-proline. The segment at 298-320 is disordered; the sequence is TTLTPTSSGKLLTRSPVPGGKKD. Ser304 bears the Phosphoserine mark.

This sequence belongs to the pyrroline-5-carboxylate reductase family. In terms of assembly, homodecamer; composed of 5 homodimers. Interacts with LTO1.

It is found in the cytoplasm. The protein localises to the mitochondrion. The catalysed reaction is L-proline + NADP(+) = (S)-1-pyrroline-5-carboxylate + NADPH + 2 H(+). It catalyses the reaction L-proline + NAD(+) = (S)-1-pyrroline-5-carboxylate + NADH + 2 H(+). It functions in the pathway amino-acid biosynthesis; L-proline biosynthesis; L-proline from L-glutamate 5-semialdehyde: step 1/1. Its function is as follows. Oxidoreductase that catalyzes the last step in proline biosynthesis, which corresponds to the reduction of pyrroline-5-carboxylate to L-proline using NAD(P)H. At physiologic concentrations, has higher specific activity in the presence of NADH. Involved in cellular response to oxidative stress. In some cell types, such as erythrocytes, its primary function may be the generation of NADP(+). This Bos taurus (Bovine) protein is Pyrroline-5-carboxylate reductase 2 (PYCR2).